Reading from the N-terminus, the 421-residue chain is MQDSIEQYMQKVGQQARDASRVLTSASTSLKNHALSAIYTALENNQAAILAANQIDMEKGRSNQLDSALLDRLELTPARFKGMLQGLKDVIALVDPIGEITDLAYRPTGIQIGKMRVPLGVVGMIYESRPNVTLEAASLAIKSGNAIILRGGSEALESNKAIAEAVKHGLKVAGLPEHSVQVIETSDRAAVGHLITMAEYVDVIVPRGGKSLIERVTNEARIPVIKHLDGNCHVFVEAQADLQKALPITLNAKTHRYGVCNAMETLLVDEKIAEVFLPHIAELYAEKQVELRGCPETHRILGTTVKPATEEDWYTEYLGPILAVKVVSGIDEAIDHINKYGSHHTDAIVTENYTLARQFLARVDSSSVVVNASTRFADGFEYGLGAEIGISTDKIHARGPVGLEGLTSQKWIVLGDGQIRQ.

Belongs to the gamma-glutamyl phosphate reductase family.

Its subcellular location is the cytoplasm. It catalyses the reaction L-glutamate 5-semialdehyde + phosphate + NADP(+) = L-glutamyl 5-phosphate + NADPH + H(+). It functions in the pathway amino-acid biosynthesis; L-proline biosynthesis; L-glutamate 5-semialdehyde from L-glutamate: step 2/2. In terms of biological role, catalyzes the NADPH-dependent reduction of L-glutamate 5-phosphate into L-glutamate 5-semialdehyde and phosphate. The product spontaneously undergoes cyclization to form 1-pyrroline-5-carboxylate. In Acinetobacter baumannii (strain SDF), this protein is Gamma-glutamyl phosphate reductase.